Consider the following 564-residue polypeptide: Copine-8 (564 aa).

C2 domains are found at residues 1–133 (MDSR…RLEK) and 142–265 (KCGT…FNVY). Asp-39, Asp-45, Asp-99, Asp-101, Ser-104, Lys-109, Asp-111, Asp-173, Asp-179, Asp-235, Asp-237, and Asp-243 together coordinate Ca(2+). Position 260 is a phosphoserine (Ser-260). Residues 309–510 (NFTVAIDFTA…VQFVPFRDYI (202 aa)) form the VWFA domain.

It belongs to the copine family. Ca(2+) serves as cofactor.

Probable calcium-dependent phospholipid-binding protein that may play a role in calcium-mediated intracellular processes. In Homo sapiens (Human), this protein is Copine-8.